We begin with the raw amino-acid sequence, 386 residues long: Rhomboid domain-containing protein 3 (386 aa).

Transmembrane regions (helical) follow at residues 20–40 (VLMLLMSTLWLVGAGPGLVLA), 58–78 (LGHTALPGLLLSLLLLPTVGW), 92–112 (ASALLALASGLLAVLLAGLGL), 141–161 (GALPPWLSPWLLLALTPLLSS), and 163–183 (PPFLQLLCGLLAGLAYAAGAF). A UBA domain is found at 324–362 (VSSLRLQQLERMGFPTEQAVVALAATGRVEGAVSLLVGG).

The protein resides in the membrane. This Homo sapiens (Human) protein is Rhomboid domain-containing protein 3 (RHBDD3).